We begin with the raw amino-acid sequence, 498 residues long: Cyclin-L1 (498 aa).

Cyclin-like stretches follow at residues 68 to 169 (ERIQ…RILK) and 182 to 266 (KIIV…NTMK). The disordered stretch occupies residues 294–498 (LKARGQNPNG…SGHSHSRHRR (205 aa)). Over residues 311-320 (NGFSPASKPS) the composition is skewed to polar residues. The segment covering 321–341 (SPRDVKMDDKSPNSKLKEPEN) has biased composition (basic and acidic residues). The tract at residues 366–396 (KNHSRSRSRSTSRSPHRHRRSHSGTYSSHSS) is RS. A compositionally biased stretch (basic residues) spans 367 to 387 (NHSRSRSRSTSRSPHRHRRSH). Positions 388–402 (SGTYSSHSSHSPSPR) are enriched in low complexity. Phosphoserine is present on residues Ser-409 and Ser-412. Over residues 415–426 (RTDRDRPSETSR) the composition is skewed to basic and acidic residues. The span at 427–440 (HSNKRRRSRSRSRS) shows a compositional bias: basic residues. Over residues 441-478 (NSRERVRDRDHIKHKQERSGSGHHWDHRDRERDRSRDH) the composition is skewed to basic and acidic residues. The segment covering 479–498 (GRNKRQSRSHSGHSHSRHRR) has biased composition (basic residues).

It belongs to the cyclin family. Cyclin L subfamily.

It is found in the nucleus speckle. It localises to the nucleus. Its subcellular location is the nucleoplasm. In terms of biological role, involved in pre-mRNA splicing. This Danio rerio (Zebrafish) protein is Cyclin-L1 (ccnl1).